The following is a 254-amino-acid chain: UPF0328 protein ECU01_0070/ECU01_1540/ECU02_1570/ECU04_0080/ECU08_2100 (254 aa).

It belongs to the UPF0328 family.

The sequence is that of UPF0328 protein ECU01_0070/ECU01_1540/ECU02_1570/ECU04_0080/ECU08_2100 from Encephalitozoon cuniculi (strain GB-M1) (Microsporidian parasite).